The sequence spans 234 residues: Proteasome subunit alpha type-2 (234 aa).

Ala-2 is modified (N-acetylalanine). Tyr-121 bears the Phosphotyrosine mark.

The protein belongs to the peptidase T1A family. The 26S proteasome consists of a 20S proteasome core and two 19S regulatory subunits. The 20S proteasome core is composed of 28 subunits that are arranged in four stacked rings, resulting in a barrel-shaped structure. The two end rings are each formed by seven alpha subunits, and the two central rings are each formed by seven beta subunits. The catalytic chamber with the active sites is on the inside of the barrel.

It localises to the cytoplasm. It is found in the nucleus. Functionally, the proteasome is a multicatalytic proteinase complex which is characterized by its ability to cleave peptides with Arg, Phe, Tyr, Leu, and Glu adjacent to the leaving group at neutral or slightly basic pH. The proteasome has an ATP-dependent proteolytic activity. PSMA2 may have a potential regulatory effect on another component(s) of the proteasome complex through tyrosine phosphorylation. The polypeptide is Proteasome subunit alpha type-2 (psma2) (Carassius auratus (Goldfish)).